Consider the following 797-residue polypeptide: MKCPGVWGMLTVTMCVVFLGCPQAQELQGHVSVILLGATGDLAKKYLWQGLFQLFLDEAGKGHSFSFHGAALTAPKQGQELMAKALESLSCPRDMAPSRCAELQAQFLRLSRYRQLKTAEDYQALGRDIEAQVQQEGLREAGRMFYFSVPPFAYADIARNINSSCRPGPGAWLRVVLEKPFGHDHLSAQQLATELGSFFQEEEMYRVDHYLGKQAVAQILPFRDQNRRALDSLWNRHHVERVEIIMKETVDAEGRTSFYEEYGVIRDTLQNHLTEILTLVAMELPANVSCSEAVLRHKLQAFRALRRLQRGSAVVGQYQTYSEQVRRELRKPAGSPSLTPTFAGVLVHVDNLRWEGVPFILMSGKALDERVGYVRVLFKNQAFCAQSEKHWAPAQSRCLPRQIIFYIGHGELGHPAVLVSRNLFRPFLPAQSWREVEDRPGLQLFGRPLSDFYAFSPVKERDAYSILLSHIFHARKESFVPTEHLLASWVFWTPLLESLAREVPRLYPGGADSGRLLDFEFSGSHLSFSLGQPEQLVPGPGSTPRPSDFQVLGAKYRESPLISAWPDELISKLASDIEAAAVQAVRRVGTFHLALSGGSSPIALFQQLASGHYGFPWAHTHLWLVDERCVPLSDPESNFQGLQAHLLQHVRVPYYNIHPMPVNLHQRLCAEEDRGAQAYASEISALVTNCSFDLVLLGMGTDGHTASLFPQSPTGLDGEQLVVLTESPSRPHQRMSLSLPLINRAKKVAVLVMGRTKRDITLLVSRVGREPKKWPISGVLPTSGQLVWYMDYEAFLG.

The N-terminal stretch at 1 to 24 is a signal peptide; it reads MKCPGVWGMLTVTMCVVFLGCPQA. A Pyrrolidone carboxylic acid modification is found at Gln-25. Residues 25 to 531 are hexose-6-phosphate dehydrogenase; sequence QELQGHVSVI…SGSHLSFSLG (507 aa). Residues 37-44 and Tyr-154 each bind NADP(+); that span reads GATGDLAK. Asn-162 is a glycosylation site (N-linked (GlcNAc...) asparagine). Lys-179 contacts NADP(+). D-glucose 6-phosphate contacts are provided by residues Lys-179, 209–213, Glu-248, and Asp-267; that span reads HYLGK. Lys-213 carries the N6-succinyllysine modification. The Proton acceptor role is filled by His-272. Asn-287 carries N-linked (GlcNAc...) asparagine glycosylation. Residues Lys-365 and Arg-370 each coordinate D-glucose 6-phosphate. Arg-375 lines the NADP(+) pocket. The tract at residues 532-545 is linker; that stretch reads QPEQLVPGPGSTPR. Residues 546–797 are 6-phosphogluconolactonase; it reads PSDFQVLGAK…WYMDYEAFLG (252 aa). Trp-623 is an NADP(+) binding site. Asn-689 is a glycosylation site (N-linked (GlcNAc...) asparagine).

In the N-terminal section; belongs to the glucose-6-phosphate dehydrogenase family. The protein in the C-terminal section; belongs to the glucosamine/galactosamine-6-phosphate isomerase family. 6-phosphogluconolactonase subfamily. As to quaternary structure, homodimer.

Its subcellular location is the endoplasmic reticulum lumen. It catalyses the reaction D-glucose 6-phosphate + NAD(+) = 6-phospho-D-glucono-1,5-lactone + NADH + H(+). The catalysed reaction is D-glucose 6-phosphate + NADP(+) = 6-phospho-D-glucono-1,5-lactone + NADPH + H(+). The enzyme catalyses 6-phospho-D-glucono-1,5-lactone + H2O = 6-phospho-D-gluconate + H(+). It carries out the reaction 2-deoxy-D-glucose 6-phosphate + NAD(+) = 2-deoxy-6-phospho-D-glucono-1,5-lactone + NADH + H(+). It catalyses the reaction 2-deoxy-D-glucose 6-phosphate + NADP(+) = 2-deoxy-6-phospho-D-glucono-1,5-lactone + NADPH + H(+). The catalysed reaction is D-galactose 6-phosphate + NADP(+) = 6-phospho-D-galactono-1,5-lactone + NADPH + H(+). The enzyme catalyses D-galactose 6-phosphate + NAD(+) = 6-phospho-D-galactono-1,5-lactone + NADH + H(+). It carries out the reaction D-glucosamine 6-phosphate + NADP(+) = 2-amino-2-deoxy-6-phospho-D-glucono-1,5-lactone + NADPH + 2 H(+). It catalyses the reaction D-glucose + NAD(+) = D-glucono-1,5-lactone + NADH + H(+). The catalysed reaction is D-glucose + NADP(+) = D-glucono-1,5-lactone + NADPH + H(+). The enzyme catalyses D-glucose 6-sulfate + NADP(+) = 6-sulfo-D-glucono-1,5-lactone + NADPH + H(+). Its pathway is carbohydrate degradation; pentose phosphate pathway; D-ribulose 5-phosphate from D-glucose 6-phosphate (oxidative stage). It functions in the pathway carbohydrate degradation; pentose phosphate pathway; D-ribulose 5-phosphate from D-glucose 6-phosphate (oxidative stage): step 2/3. Bifunctional enzyme localized in the lumen of the endoplasmic reticulum that catalyzes the first two steps of the oxidative branch of the pentose phosphate pathway/shunt, an alternative to glycolysis and a major source of reducing power and metabolic intermediates for biosynthetic processes. Has a hexose-6-phosphate dehydrogenase activity, with broad substrate specificity compared to glucose-6-phosphate 1-dehydrogenase/G6PD, and catalyzes the first step of the pentose phosphate pathway. In addition, acts as a 6-phosphogluconolactonase and catalyzes the second step of the pentose phosphate pathway. May have a dehydrogenase activity for alternative substrates including glucosamine 6-phosphate and glucose 6-sulfate. The main function of this enzyme is to provide reducing equivalents such as NADPH to maintain the adequate levels of reductive cofactors in the oxidizing environment of the endoplasmic reticulum. By producing NADPH that is needed by reductases of the lumen of the endoplasmic reticulum like corticosteroid 11-beta-dehydrogenase isozyme 1/HSD11B1, indirectly regulates their activity. This Oryctolagus cuniculus (Rabbit) protein is GDH/6PGL endoplasmic bifunctional protein.